The chain runs to 613 residues: Zinc metalloproteinase-disintegrin-like atragin (613 aa).

The N-terminal stretch at 1 to 20 (MIQALLVIICLAVFPHQGSS) is a signal peptide. Residues 21 to 191 (IILESGNVND…DESIEKTSQL (171 aa)) constitute a propeptide that is removed on maturation. In terms of domain architecture, Peptidase M12B spans 205 to 400 (KYIEFYVVVD…DRPQCILNKP (196 aa)). E208 and D292 together coordinate Ca(2+). 2 cysteine pairs are disulfide-bonded: C316/C395 and C356/C379. Zn(2+) is bound by residues H341, H345, and H351. Ca(2+) contacts are provided by C395, N398, I410, N413, F415, E417, E420, and D423. The Disintegrin domain maps to 408 to 494 (PPICGNYFVE…ECPTDVFQRN (87 aa)). 15 disulfide bridges follow: C411–C440, C422–C435, C424–C430, C434–C457, C448–C454, C453–C479, C466–C486, C473–C505, C498–C510, C517–C567, C532–C575, C542–C577, C545–C555, C562–C601, and C595–C606. A glycan (N-linked (GlcNAc...) asparagine) is linked at N436. A D/ECD-tripeptide motif is present at residues 472–474 (DCD). Residues D474, L475, E477, D489, and V490 each coordinate Ca(2+). Positions 560-574 (VKCGRLFCKRRNSMI) are hypervariable region that may play important roles toward cell migration.

The protein belongs to the venom metalloproteinase (M12B) family. P-III subfamily. P-IIIa sub-subfamily. In terms of assembly, monomer. The cofactor is Zn(2+). In terms of tissue distribution, expressed by the venom gland.

Its subcellular location is the secreted. Snake venom zinc metalloproteinase that seems to inhibit cell migration. This activity is dominated by the local structure of the hyper-variable region. The polypeptide is Zinc metalloproteinase-disintegrin-like atragin (Naja atra (Chinese cobra)).